Reading from the N-terminus, the 288-residue chain is uncharacterized protein (288 aa).

NAD(+)-binding positions include 6–20 (GFIGLGVMGKSMASH) and threonine 97. Lysine 172 is an active-site residue. NAD(+) is bound at residue lysine 240.

The protein belongs to the HIBADH-related family.

Its subcellular location is the cell membrane. The protein localises to the membrane raft. This is an uncharacterized protein from Bacillus subtilis (strain 168).